The sequence spans 104 residues: Salivary protein FS145 (104 aa).

The N-terminal stretch at 1–18 (MKLFAVFLLFCLVNQIYC) is a signal peptide. Intrachain disulfides connect cysteine 32–cysteine 80, cysteine 62–cysteine 89, cysteine 72–cysteine 100, and cysteine 76–cysteine 102. The Putative integrin attachment site; atypical (WGD) signature appears at 92–94 (WGD).

As to quaternary structure, interacts with host integrin alpha-V/beta-3 (ITGAV:ITGB3).

It localises to the secreted. Its function is as follows. Inhibits proliferation, adhesion and migration of host cells as well as host angiogenesis by blocking host integrin alpha-V/beta-3 (ITGAV:ITGB3). This Xenopsylla cheopis (Oriental rat flea) protein is Salivary protein FS145.